The sequence spans 1150 residues: Rho-type GTPase-activating protein 1 (1150 aa).

The segment covering 1–10 has biased composition (basic and acidic residues); the sequence is MSQRDAKKDG. Residues 1–78 form a disordered region; it reads MSQRDAKKDG…AESRKALPNQ (78 aa). A compositionally biased stretch (polar residues) spans 40–62; it reads TTKNFPHSRHTSTVAGTEGGSSL. LIM zinc-binding domains are found at residues 114 to 177, 178 to 238, and 483 to 546; these read KICA…RRLD, LLCA…LFAA, and DLCY…SSNV. Residues 586–683 are disordered; that stretch reads SQRKPLSVDP…SHGGSITGKS (98 aa). Positions 598 to 617 are enriched in polar residues; that stretch reads ENVSSTVETAKQAETTASSD. A compositionally biased stretch (low complexity) spans 642 to 655; the sequence is SNETQSSSNSTETS. S690 is subject to Phosphoserine. The tract at residues 726–759 is disordered; the sequence is AFRHMPSYTDPSYRKNSGAIYDKNDGTQKGLTPK. In terms of domain architecture, Rho-GAP spans 837 to 1038; that stretch reads VPLEILVERN…LLIENFEKFC (202 aa). Disordered regions lie at residues 1078 to 1097 and 1104 to 1150; these read LDERNTPKHTASTKRKRQPI and LTSD…IRDS. Basic residues predominate over residues 1088-1097; it reads ASTKRKRQPI. The segment covering 1104–1134 has biased composition (polar residues); it reads LTSDVPSGSEVADTNSLSSTTKDEASPNSDA.

Its subcellular location is the cell tip. It localises to the nucleus. Its function is as follows. GTPase-activating protein for Rho1. Involved in the F-actin patch localization, cell morphogenesis, regulation of septation, and cell wall synthesis. The sequence is that of Rho-type GTPase-activating protein 1 (rga1) from Schizosaccharomyces pombe (strain 972 / ATCC 24843) (Fission yeast).